Consider the following 187-residue polypeptide: Reactive Intermediate Deaminase A, chloroplastic (187 aa).

A chloroplast-targeting transit peptide spans 1-58 (MTWSVFRSINTPTLDLSTALRSTRTPLVAAGVGCATFAGVSLFRMSSRSPPFASLSVS). Arginine 165 is a substrate binding site.

This sequence belongs to the RutC family. Expressed in leaves, petiols, petals, carpels and shoot apex.

It is found in the plastid. The protein resides in the chloroplast. The catalysed reaction is 2-iminobutanoate + H2O = 2-oxobutanoate + NH4(+). It carries out the reaction 2-iminopropanoate + H2O = pyruvate + NH4(+). Its pathway is amino-acid biosynthesis; L-isoleucine biosynthesis; 2-oxobutanoate from L-threonine. Its function is as follows. Hydrolyzes the Ser-derived enamine/imine product of Thr dehydratase, protecting the plastidial branched-chain aminotransferase BCAT3 (AC Q9M401) from inactivation. Involved in Ile biosynthesis. The protein is Reactive Intermediate Deaminase A, chloroplastic of Arabidopsis thaliana (Mouse-ear cress).